The following is a 397-amino-acid chain: 1-deoxy-D-xylulose 5-phosphate reductoisomerase (397 aa).

The NADPH site is built by Thr-12, Gly-13, Ser-14, Ile-15, Gly-38, Lys-39, Asn-40, and Asn-126. Lys-127 serves as a coordination point for 1-deoxy-D-xylulose 5-phosphate. Glu-128 is a binding site for NADPH. Residue Asp-152 participates in Mn(2+) binding. Ser-153, Glu-154, Ser-188, and His-211 together coordinate 1-deoxy-D-xylulose 5-phosphate. Position 154 (Glu-154) interacts with Mn(2+). Position 217 (Gly-217) interacts with NADPH. Residues Ser-224, Asn-229, Lys-230, and Glu-233 each contribute to the 1-deoxy-D-xylulose 5-phosphate site. Residue Glu-233 participates in Mn(2+) binding.

It belongs to the DXR family. Mg(2+) serves as cofactor. The cofactor is Mn(2+).

It carries out the reaction 2-C-methyl-D-erythritol 4-phosphate + NADP(+) = 1-deoxy-D-xylulose 5-phosphate + NADPH + H(+). The protein operates within isoprenoid biosynthesis; isopentenyl diphosphate biosynthesis via DXP pathway; isopentenyl diphosphate from 1-deoxy-D-xylulose 5-phosphate: step 1/6. In terms of biological role, catalyzes the NADPH-dependent rearrangement and reduction of 1-deoxy-D-xylulose-5-phosphate (DXP) to 2-C-methyl-D-erythritol 4-phosphate (MEP). The protein is 1-deoxy-D-xylulose 5-phosphate reductoisomerase of Haemophilus influenzae (strain PittGG).